We begin with the raw amino-acid sequence, 225 residues long: PKHD-type hydroxylase YbiX (225 aa).

One can recognise a Fe2OG dioxygenase domain in the interval 78-177 (TLSTPLFNRY…RVASFMWIQS (100 aa)). His-96, Asp-98, and His-158 together coordinate Fe cation. Position 168 (Arg-168) interacts with 2-oxoglutarate.

Fe(2+) serves as cofactor. L-ascorbate is required as a cofactor.

This Escherichia coli (strain K12 / DH10B) protein is PKHD-type hydroxylase YbiX.